The sequence spans 216 residues: FMN-dependent NADH:quinone oxidoreductase 3 (216 aa).

FMN contacts are provided by residues S10 and S16–S18.

The protein belongs to the azoreductase type 1 family. As to quaternary structure, homodimer. It depends on FMN as a cofactor.

It catalyses the reaction 2 a quinone + NADH + H(+) = 2 a 1,4-benzosemiquinone + NAD(+). The catalysed reaction is N,N-dimethyl-1,4-phenylenediamine + anthranilate + 2 NAD(+) = 2-(4-dimethylaminophenyl)diazenylbenzoate + 2 NADH + 2 H(+). Its function is as follows. Quinone reductase that provides resistance to thiol-specific stress caused by electrophilic quinones. Also exhibits azoreductase activity. Catalyzes the reductive cleavage of the azo bond in aromatic azo compounds to the corresponding amines. This chain is FMN-dependent NADH:quinone oxidoreductase 3, found in Pseudomonas fluorescens (strain ATCC BAA-477 / NRRL B-23932 / Pf-5).